The primary structure comprises 489 residues: Glutamyl-tRNA(Gln) amidotransferase subunit A (489 aa).

Residues lysine 79 and serine 158 each act as charge relay system in the active site. Serine 182 acts as the Acyl-ester intermediate in catalysis.

It belongs to the amidase family. GatA subfamily. Heterotrimer of A, B and C subunits.

It carries out the reaction L-glutamyl-tRNA(Gln) + L-glutamine + ATP + H2O = L-glutaminyl-tRNA(Gln) + L-glutamate + ADP + phosphate + H(+). Allows the formation of correctly charged Gln-tRNA(Gln) through the transamidation of misacylated Glu-tRNA(Gln) in organisms which lack glutaminyl-tRNA synthetase. The reaction takes place in the presence of glutamine and ATP through an activated gamma-phospho-Glu-tRNA(Gln). The protein is Glutamyl-tRNA(Gln) amidotransferase subunit A of Anaplasma marginale (strain Florida).